The primary structure comprises 274 residues: 4-hydroxy-3-methylbut-2-enyl diphosphate reductase (274 aa).

Cys-12 contributes to the [4Fe-4S] cluster binding site. (2E)-4-hydroxy-3-methylbut-2-enyl diphosphate is bound by residues His-36 and His-70. Dimethylallyl diphosphate contacts are provided by His-36 and His-70. Residues His-36 and His-70 each coordinate isopentenyl diphosphate. Cys-92 lines the [4Fe-4S] cluster pocket. Residue His-120 coordinates (2E)-4-hydroxy-3-methylbut-2-enyl diphosphate. His-120 is a binding site for dimethylallyl diphosphate. His-120 is a binding site for isopentenyl diphosphate. The active-site Proton donor is Glu-122. Thr-158 lines the (2E)-4-hydroxy-3-methylbut-2-enyl diphosphate pocket. Cys-186 lines the [4Fe-4S] cluster pocket. Ser-214, Ser-215, Asn-216, and Ser-258 together coordinate (2E)-4-hydroxy-3-methylbut-2-enyl diphosphate. Ser-214, Ser-215, Asn-216, and Ser-258 together coordinate dimethylallyl diphosphate. Residues Ser-214, Ser-215, Asn-216, and Ser-258 each coordinate isopentenyl diphosphate.

The protein belongs to the IspH family. It depends on [4Fe-4S] cluster as a cofactor.

The catalysed reaction is isopentenyl diphosphate + 2 oxidized [2Fe-2S]-[ferredoxin] + H2O = (2E)-4-hydroxy-3-methylbut-2-enyl diphosphate + 2 reduced [2Fe-2S]-[ferredoxin] + 2 H(+). It catalyses the reaction dimethylallyl diphosphate + 2 oxidized [2Fe-2S]-[ferredoxin] + H2O = (2E)-4-hydroxy-3-methylbut-2-enyl diphosphate + 2 reduced [2Fe-2S]-[ferredoxin] + 2 H(+). It functions in the pathway isoprenoid biosynthesis; dimethylallyl diphosphate biosynthesis; dimethylallyl diphosphate from (2E)-4-hydroxy-3-methylbutenyl diphosphate: step 1/1. The protein operates within isoprenoid biosynthesis; isopentenyl diphosphate biosynthesis via DXP pathway; isopentenyl diphosphate from 1-deoxy-D-xylulose 5-phosphate: step 6/6. Catalyzes the conversion of 1-hydroxy-2-methyl-2-(E)-butenyl 4-diphosphate (HMBPP) into a mixture of isopentenyl diphosphate (IPP) and dimethylallyl diphosphate (DMAPP). Acts in the terminal step of the DOXP/MEP pathway for isoprenoid precursor biosynthesis. This Campylobacter concisus (strain 13826) protein is 4-hydroxy-3-methylbut-2-enyl diphosphate reductase.